Here is a 98-residue protein sequence, read N- to C-terminus: Feather beta keratin (98 aa).

Serine 2 bears the N-acetylserine mark.

It belongs to the avian keratin family. In terms of assembly, the avian keratins (F-ker, S-ker, C-ker and B-ker) are a complex mixture of very similar polypeptides.

This chain is Feather beta keratin, found in Mycteria americana (Wood stork).